Reading from the N-terminus, the 1317-residue chain is DNA-directed RNA polymerase subunit beta' (1317 aa).

Zn(2+) contacts are provided by Cys60, Cys62, Cys75, and Cys78. Positions 535, 537, and 539 each coordinate Mg(2+). Zn(2+) contacts are provided by Cys890, Cys967, Cys974, and Cys977.

It belongs to the RNA polymerase beta' chain family. As to quaternary structure, the RNAP catalytic core consists of 2 alpha, 1 beta, 1 beta' and 1 omega subunit. When a sigma factor is associated with the core the holoenzyme is formed, which can initiate transcription. The cofactor is Mg(2+). Requires Zn(2+) as cofactor.

It catalyses the reaction RNA(n) + a ribonucleoside 5'-triphosphate = RNA(n+1) + diphosphate. In terms of biological role, DNA-dependent RNA polymerase catalyzes the transcription of DNA into RNA using the four ribonucleoside triphosphates as substrates. The sequence is that of DNA-directed RNA polymerase subunit beta' from Mycolicibacterium smegmatis (strain ATCC 700084 / mc(2)155) (Mycobacterium smegmatis).